The following is a 252-amino-acid chain: MEDKSLVTLKKKTFEVSKFSNLGAIELFVDGRRKRPKYFHRRRETVLNHVGGKKSEHKLDVFDQRDYKMIKSYAFLKIVGVQLVVTSHLPADTPGFIQIDLLDSRLTEKRKKGKTIQRFKARACDNCSVAQYKVEYSISTQENVLDVWKVGCISEGVPVCDGTYPFSIEVSLIWVATDSTRRLNVEELNSSDYIEGDFTDQEVFGEFMSLKQVEMKTIEAKYDGPYRPATTRPKSLLSSEDVKRASNKKNSS.

The disordered stretch occupies residues 222 to 252 (YDGPYRPATTRPKSLLSSEDVKRASNKKNSS).

The sequence is that of 29 kDa protein from Beta vulgaris (Sugar beet).